The chain runs to 621 residues: Chaperone protein HtpG (621 aa).

Positions Met-1–Arg-341 are a; substrate-binding. The b stretch occupies residues Glu-342–Asn-547. The tract at residues Trp-548–Leu-621 is c.

It belongs to the heat shock protein 90 family. As to quaternary structure, homodimer.

The protein resides in the cytoplasm. Molecular chaperone. Has ATPase activity. The sequence is that of Chaperone protein HtpG from Helicobacter pylori (strain J99 / ATCC 700824) (Campylobacter pylori J99).